The chain runs to 367 residues: Molybdopterin synthase catalytic subunit (367 aa).

Residues 101–102, Lys-117, and 124–126 contribute to the substrate site; these read HR and KKE. The disordered stretch occupies residues 326 to 345; it reads HFTKREPSSMEAAPPKKIRK.

It belongs to the MoaE family. MOCS2B subfamily. Heterotetramer; composed of 2 small (Mocs2A) and 2 large (Mocs2B) subunits.

The protein localises to the cytoplasm. It catalyses the reaction 2 [molybdopterin-synthase sulfur-carrier protein]-C-terminal-Gly-aminoethanethioate + cyclic pyranopterin phosphate + H2O = molybdopterin + 2 [molybdopterin-synthase sulfur-carrier protein]-C-terminal Gly-Gly + 2 H(+). It functions in the pathway cofactor biosynthesis; molybdopterin biosynthesis. In terms of biological role, catalytic subunit of the molybdopterin synthase complex, a complex that catalyzes the conversion of precursor Z into molybdopterin. Acts by mediating the incorporation of 2 sulfur atoms from thiocarboxylated Mocs2A into precursor Z to generate a dithiolene group. The sequence is that of Molybdopterin synthase catalytic subunit from Drosophila sechellia (Fruit fly).